Reading from the N-terminus, the 154-residue chain is Prefoldin subunit 5 (154 aa).

An N-acetylalanine modification is found at Ala-2. The residue at position 42 (Lys-42) is an N6-acetyllysine. Ser-56 carries the phosphoserine modification.

It belongs to the prefoldin subunit alpha family. Heterohexamer of two PFD-alpha type and four PFD-beta type subunits. Binds to MYC; interacts with its N-terminal domain. As to expression, highly expressed in pancreas and skeletal muscle and moderately in other tissues.

The protein resides in the nucleus. It is found in the cytoplasm. Binds specifically to cytosolic chaperonin (c-CPN) and transfers target proteins to it. Binds to nascent polypeptide chain and promotes folding in an environment in which there are many competing pathways for nonnative proteins. Represses the transcriptional activity of MYC. In Homo sapiens (Human), this protein is Prefoldin subunit 5 (PFDN5).